Here is a 456-residue protein sequence, read N- to C-terminus: ATP-dependent protease ATPase subunit HslU (456 aa).

ATP is bound by residues V18, 60 to 65 (GVGKTE), D269, E334, and R406.

Belongs to the ClpX chaperone family. HslU subfamily. In terms of assembly, a double ring-shaped homohexamer of HslV is capped on each side by a ring-shaped HslU homohexamer. The assembly of the HslU/HslV complex is dependent on binding of ATP.

It localises to the cytoplasm. Functionally, ATPase subunit of a proteasome-like degradation complex; this subunit has chaperone activity. The binding of ATP and its subsequent hydrolysis by HslU are essential for unfolding of protein substrates subsequently hydrolyzed by HslV. HslU recognizes the N-terminal part of its protein substrates and unfolds these before they are guided to HslV for hydrolysis. The sequence is that of ATP-dependent protease ATPase subunit HslU from Desulfosudis oleivorans (strain DSM 6200 / JCM 39069 / Hxd3) (Desulfococcus oleovorans).